Reading from the N-terminus, the 177-residue chain is Large ribosomal subunit protein uL6 (177 aa).

Belongs to the universal ribosomal protein uL6 family. As to quaternary structure, part of the 50S ribosomal subunit.

In terms of biological role, this protein binds to the 23S rRNA, and is important in its secondary structure. It is located near the subunit interface in the base of the L7/L12 stalk, and near the tRNA binding site of the peptidyltransferase center. This Dichelobacter nodosus (strain VCS1703A) protein is Large ribosomal subunit protein uL6.